Here is a 175-residue protein sequence, read N- to C-terminus: Peptide methionine sulfoxide reductase MsrA (175 aa).

Cys-10 is a catalytic residue.

The protein belongs to the MsrA Met sulfoxide reductase family.

The catalysed reaction is L-methionyl-[protein] + [thioredoxin]-disulfide + H2O = L-methionyl-(S)-S-oxide-[protein] + [thioredoxin]-dithiol. It carries out the reaction [thioredoxin]-disulfide + L-methionine + H2O = L-methionine (S)-S-oxide + [thioredoxin]-dithiol. In terms of biological role, has an important function as a repair enzyme for proteins that have been inactivated by oxidation. Catalyzes the reversible oxidation-reduction of methionine sulfoxide in proteins to methionine. This is Peptide methionine sulfoxide reductase MsrA from Clavibacter michiganensis subsp. michiganensis (strain NCPPB 382).